A 347-amino-acid chain; its full sequence is Phenylalanine--tRNA ligase alpha subunit (347 aa).

Glu-261 is a binding site for Mg(2+).

It belongs to the class-II aminoacyl-tRNA synthetase family. Phe-tRNA synthetase alpha subunit type 1 subfamily. As to quaternary structure, tetramer of two alpha and two beta subunits. Requires Mg(2+) as cofactor.

It localises to the cytoplasm. The enzyme catalyses tRNA(Phe) + L-phenylalanine + ATP = L-phenylalanyl-tRNA(Phe) + AMP + diphosphate + H(+). This is Phenylalanine--tRNA ligase alpha subunit from Streptococcus pyogenes serotype M3 (strain ATCC BAA-595 / MGAS315).